The sequence spans 87 residues: MVNLCDLKKEPQINYPTFWDYKVIFEVHVKASEIFEEILGQREYKFKHSNSSASGKYQSYLLNVYVDSKKDRLDIFDKLKAKAKFVL.

To H.pylori HP0495/JHP0447.

This is an uncharacterized protein from Campylobacter jejuni subsp. jejuni serotype O:2 (strain ATCC 700819 / NCTC 11168).